The primary structure comprises 539 residues: Chaperonin GroEL (539 aa).

Residues 29-32 (TIGP), 86-90 (DGTTT), Gly413, 476-478 (NAA), and Asp492 contribute to the ATP site.

It belongs to the chaperonin (HSP60) family. As to quaternary structure, forms a cylinder of 14 subunits composed of two heptameric rings stacked back-to-back. Interacts with the co-chaperonin GroES.

It localises to the cytoplasm. The enzyme catalyses ATP + H2O + a folded polypeptide = ADP + phosphate + an unfolded polypeptide.. Its function is as follows. Together with its co-chaperonin GroES, plays an essential role in assisting protein folding. The GroEL-GroES system forms a nano-cage that allows encapsulation of the non-native substrate proteins and provides a physical environment optimized to promote and accelerate protein folding. The sequence is that of Chaperonin GroEL from Pediococcus pentosaceus (strain ATCC 25745 / CCUG 21536 / LMG 10740 / 183-1w).